The primary structure comprises 518 residues: Calcium/calmodulin-dependent protein kinase kinase cmkC (518 aa).

Residues 1 to 72 are disordered; sequence MANEGAGSLQ…SEYTLSQDDG (72 aa). Polar residues-rich tracts occupy residues 8-17 and 60-71; these read SLQQDASPGS and NARSEYTLSQDD. Residues 81–376 form the Protein kinase domain; that stretch reads YVIKQEIGRG…MDELREHPWV (296 aa). ATP is bound by residues 87–95 and lysine 109; that span reads IGRGSFGAV. The segment at 119-149 is disordered; that stretch reads RAKSQLLRQSRGPKRSSRWPKLPFSSPGTGT. Aspartate 243 serves as the catalytic Proton acceptor. An autoinhibitory domain region spans residues 404 to 409; it reads FSAITK. Residues 407-431 form a calmodulin-binding region; that stretch reads ITKNFGHVLAVMKAAKKFKSLQGPT. Positions 453 to 472 are disordered; the sequence is PTQMDPEESVSLPSPLPYKK.

This sequence belongs to the protein kinase superfamily. Ser/Thr protein kinase family.

The enzyme catalyses L-seryl-[protein] + ATP = O-phospho-L-seryl-[protein] + ADP + H(+). The catalysed reaction is L-threonyl-[protein] + ATP = O-phospho-L-threonyl-[protein] + ADP + H(+). Its activity is regulated as follows. Activated by Ca(2+)/calmodulin. Binding of calmodulin may relieve intrasteric autoinhibition. Functionally, calcium/calmodulin-dependent protein kinase that operates in the calcium-triggered CaMKK-CaMK1 signaling cascade. Phosphorylates and activates cmkB in vitro. Required in G1-phase of the cell cycle for proper timing of the initial nuclear division after germination as well as for subsequent nuclear division cycles. Required for the normal temporal regulation of nimX activity. The chain is Calcium/calmodulin-dependent protein kinase kinase cmkC from Emericella nidulans (Aspergillus nidulans).